A 440-amino-acid chain; its full sequence is MTKKLVTEEMRKQWLPVLQKESEAIQPLSAENVTIRLMQNQAEWNAKNLGESDAPGSVNSTVGKWQPVLIDMAKRLAPINIAMDFFGVQPLSGPDGQIFALRARQGVGDGSTTAQARKELFMNEADSGYSGDGTVQAGDPSGFSQAEIEGSGSVVTTIGKGMPSTDAELLGTTTNPWARVGITVQKATVTAKSRGLYADYSHELRQDMMAIHGEDVDNILSDVMVTEIQAEMNREFIRTMNFSAVRFKKFGTNGVVDIAQDISGRWALEKWKFLTFMLEVEANGIGVDTRRGKGNRVLCSPNVASALAMSGMLDYAPVLQENTKLAVDPTGQTFAGVLSNGMRVYVDPYAVAEYITLAYKGATALDAGIFFAPYVPLEMYRTQGETTFSPRMAFKTRYGICANPFVQIPANQDPQVYVTADGIAQDSNPYFRKGLIKSLF.

This sequence belongs to the T4 phage major capsid protein family.

The protein resides in the virion. Major capsid protein that self-associates to form the icosahedral capsid. This Salmonella typhi protein is Major capsid protein.